We begin with the raw amino-acid sequence, 1158 residues long: ATP-dependent helicase/deoxyribonuclease subunit B (1158 aa).

One can recognise a UvrD-like helicase ATP-binding domain in the interval 1-275 (MTLHAYLGRA…QYFNQLYRFN (275 aa)). 8–15 (GRAGTGKS) is a binding site for ATP. One can recognise a UvrD-like helicase C-terminal domain in the interval 269–583 (NQLYRFNNQD…SIGTMDLAKV (315 aa)). [4Fe-4S] cluster contacts are provided by Cys-784, Cys-1112, Cys-1115, and Cys-1121.

Belongs to the helicase family. AddB/RexB type 1 subfamily. In terms of assembly, heterodimer of AddA and AddB. Requires Mg(2+) as cofactor. [4Fe-4S] cluster is required as a cofactor.

In terms of biological role, the heterodimer acts as both an ATP-dependent DNA helicase and an ATP-dependent, dual-direction single-stranded exonuclease. Recognizes the chi site generating a DNA molecule suitable for the initiation of homologous recombination. The AddB subunit has 5' -&gt; 3' nuclease activity but not helicase activity. This Staphylococcus aureus (strain COL) protein is ATP-dependent helicase/deoxyribonuclease subunit B.